The sequence spans 240 residues: MAMASVKLLAGVLRKPDAWIGLWGVLRGTPSSYKLCTSWNRYLYFSSTKLRAPNYKTLFYNIFSLRLPGLLLSPECIFPFSVRLKSNIRSTKSTKKSLQKVDEEDSDEESHHDEMSEQEEELEDDPTVVKNYKDLEKAVQSFRYDVVLKTGLDIGRNKVEDAFYKGELRLNEEKLWKKSRTVKVGDTLDLLIGEDKEAGTETVMRILLKKVFEEKTESEKYRVVLRRWKSLKLPKKRMSK.

A mitochondrion-targeting transit peptide spans 1 to 84 (MAMASVKLLA…ECIFPFSVRL (84 aa)). The interval 95-127 (KKSLQKVDEEDSDEESHHDEMSEQEEELEDDPT) is disordered. Serine 106 and serine 116 each carry phosphoserine. Residues 116–126 (SEQEEELEDDP) show a composition bias toward acidic residues. Positions 142–217 (FRYDVVLKTG…LKKVFEEKTE (76 aa)) constitute an S4 RNA-binding domain.

In terms of assembly, monomer. Interacts with POLRMT. Interacts (via S4 domain) with MTRFR (via C-terminus). Associates with mitoribosomal S39 large subunit, peptidyl tRNA and nascent chain.

The protein localises to the mitochondrion matrix. Mitochondrial RNA-binding protein involved in mitochondrial transcription regulation. Functions as a protective factor to maintain proper mitochondrial RNA level during stress. Acts at the transcription level and its protective function depends on its RNA binding ability. Part of a mitoribosome-associated quality control pathway that prevents aberrant translation by responding to interruptions during elongation. As heterodimer with MTRF, ejects the unfinished nascent chain and peptidyl transfer RNA (tRNA), respectively, from stalled ribosomes. Recruitment of mitoribosome biogenesis factors to these quality control intermediates suggests additional roles for MTRES1 and MTRF during mitoribosome rescue. This chain is Mitochondrial transcription rescue factor 1, found in Homo sapiens (Human).